The following is a 258-amino-acid chain: UPF0246 protein YaaA (258 aa).

This sequence belongs to the UPF0246 family.

The chain is UPF0246 protein YaaA from Shigella boydii serotype 18 (strain CDC 3083-94 / BS512).